A 341-amino-acid polypeptide reads, in one-letter code: Biotin synthase (341 aa).

One can recognise a Radical SAM core domain in the interval 40-267 (AEIQVSTLLS…RSMVRLSAGR (228 aa)). [4Fe-4S] cluster-binding residues include C55, C59, and C62. Residues C99, C130, C190, and R262 each contribute to the [2Fe-2S] cluster site.

It belongs to the radical SAM superfamily. Biotin synthase family. In terms of assembly, homodimer. [4Fe-4S] cluster serves as cofactor. [2Fe-2S] cluster is required as a cofactor.

It catalyses the reaction (4R,5S)-dethiobiotin + (sulfur carrier)-SH + 2 reduced [2Fe-2S]-[ferredoxin] + 2 S-adenosyl-L-methionine = (sulfur carrier)-H + biotin + 2 5'-deoxyadenosine + 2 L-methionine + 2 oxidized [2Fe-2S]-[ferredoxin]. It functions in the pathway cofactor biosynthesis; biotin biosynthesis; biotin from 7,8-diaminononanoate: step 2/2. Catalyzes the conversion of dethiobiotin (DTB) to biotin by the insertion of a sulfur atom into dethiobiotin via a radical-based mechanism. This chain is Biotin synthase, found in Xylella fastidiosa (strain M23).